The chain runs to 20 residues: Collagenolytic protease 36 kDa C (20 aa).

Positions 1-20 constitute a Peptidase S1 domain; that stretch reads IVGGSEATSGQFPYQXSFQD. The tract at residues 1–20 is disordered; the sequence is IVGGSEATSGQFPYQXSFQD.

The protein belongs to the peptidase S1 family.

It carries out the reaction Hydrolysis of proteins, with broad specificity for peptide bonds. Native collagen is cleaved about 75% of the length of the molecule from the N-terminus. Low activity on small molecule substrates of both trypsin and chymotrypsin.. Functionally, this enzyme is a serine protease capable of degrading the native triple helix of collagen. The sequence is that of Collagenolytic protease 36 kDa C from Paralithodes camtschaticus (Red king crab).